Reading from the N-terminus, the 313-residue chain is Acetyl-coenzyme A carboxylase carboxyl transferase subunit alpha (313 aa).

The CoA carboxyltransferase C-terminal domain maps to 30–291 (DLDREISDLE…KMALLQELAF (262 aa)).

This sequence belongs to the AccA family. Acetyl-CoA carboxylase is a heterohexamer composed of biotin carboxyl carrier protein (AccB), biotin carboxylase (AccC) and two subunits each of ACCase subunit alpha (AccA) and ACCase subunit beta (AccD).

It localises to the cytoplasm. The catalysed reaction is N(6)-carboxybiotinyl-L-lysyl-[protein] + acetyl-CoA = N(6)-biotinyl-L-lysyl-[protein] + malonyl-CoA. It participates in lipid metabolism; malonyl-CoA biosynthesis; malonyl-CoA from acetyl-CoA: step 1/1. Functionally, component of the acetyl coenzyme A carboxylase (ACC) complex. First, biotin carboxylase catalyzes the carboxylation of biotin on its carrier protein (BCCP) and then the CO(2) group is transferred by the carboxyltransferase to acetyl-CoA to form malonyl-CoA. In Zymomonas mobilis subsp. mobilis (strain ATCC 31821 / ZM4 / CP4), this protein is Acetyl-coenzyme A carboxylase carboxyl transferase subunit alpha.